We begin with the raw amino-acid sequence, 635 residues long: Chaperone protein HtpG (635 aa).

Residues 1–343 (MSVETQKETL…SNDLSLNVSR (343 aa)) are a; substrate-binding. The segment at 344 to 560 (EILQKDPIID…EQDMGLQMRQ (217 aa)) is b. A c region spans residues 561–635 (ILEASGQKVP…LNKLLVELSV (75 aa)).

It belongs to the heat shock protein 90 family. Homodimer.

It localises to the cytoplasm. Its function is as follows. Molecular chaperone. Has ATPase activity. This chain is Chaperone protein HtpG, found in Pseudomonas syringae pv. tomato (strain ATCC BAA-871 / DC3000).